Reading from the N-terminus, the 483-residue chain is Iroquois-class homeodomain protein IRX-5 (483 aa).

The segment at residues 113-175 is a DNA-binding region (homeobox; TALE-type); it reads DPAYRKNATR…NARRRLKKEN (63 aa). 2 disordered regions span residues 177-392 and 423-442; these read MTWT…QCPF and GHPG…FNGL. The span at 186 to 203 shows a compositional bias: acidic residues; that stretch reads EDEEEEENIDLEKNDEDE. Composition is skewed to basic and acidic residues over residues 204–213 and 250–261; these read PQKPEDKGDP and SDFKEPPSEGRL. Low complexity-rich tracts occupy residues 266–282 and 374–388; these read GPPR…AAAR and SRAS…SPSA. Phosphoserine is present on Ser274. Ser464 carries the phosphoserine modification.

The protein belongs to the TALE/IRO homeobox family.

Its subcellular location is the nucleus. Establishes the cardiac repolarization gradient by its repressive actions on the KCND2 potassium-channel gene. Required for retinal cone bipolar cell differentiation. May regulate contrast adaptation in the retina and control specific aspects of visual function in circuits of the mammalian retina. Could be involved in the regulation of both the cell cycle and apoptosis in prostate cancer cells. Involved in craniofacial and gonadal development. Modulates the migration of progenitor cell populations in branchial arches and gonads by repressing CXCL12. The polypeptide is Iroquois-class homeodomain protein IRX-5 (IRX5) (Homo sapiens (Human)).